Consider the following 310-residue polypeptide: Methionyl-tRNA formyltransferase (310 aa).

111-114 provides a ligand contact to (6S)-5,6,7,8-tetrahydrofolate; sequence SLLP.

The protein belongs to the Fmt family.

It carries out the reaction L-methionyl-tRNA(fMet) + (6R)-10-formyltetrahydrofolate = N-formyl-L-methionyl-tRNA(fMet) + (6S)-5,6,7,8-tetrahydrofolate + H(+). Its function is as follows. Attaches a formyl group to the free amino group of methionyl-tRNA(fMet). The formyl group appears to play a dual role in the initiator identity of N-formylmethionyl-tRNA by promoting its recognition by IF2 and preventing the misappropriation of this tRNA by the elongation apparatus. This chain is Methionyl-tRNA formyltransferase, found in Rhodopseudomonas palustris (strain BisB18).